The primary structure comprises 108 residues: Putative disulfide oxidoreductase YuzD (108 aa).

Residues cysteine 16 and cysteine 19 are joined by a disulfide bond.

The sequence is that of Putative disulfide oxidoreductase YuzD (yuzD) from Bacillus subtilis (strain 168).